Here is a 132-residue protein sequence, read N- to C-terminus: Ribosome-binding factor A (132 aa).

It belongs to the RbfA family. As to quaternary structure, monomer. Binds 30S ribosomal subunits, but not 50S ribosomal subunits or 70S ribosomes.

It is found in the cytoplasm. One of several proteins that assist in the late maturation steps of the functional core of the 30S ribosomal subunit. Associates with free 30S ribosomal subunits (but not with 30S subunits that are part of 70S ribosomes or polysomes). Required for efficient processing of 16S rRNA. May interact with the 5'-terminal helix region of 16S rRNA. The polypeptide is Ribosome-binding factor A (Pasteurella multocida (strain Pm70)).